The primary structure comprises 184 residues: uncharacterized protein (184 aa).

Positions 1–20 (MYQLEKIWVLLCLALVGVLG) are cleaved as a signal peptide.

This is an uncharacterized protein from Drosophila melanogaster (Fruit fly).